A 104-amino-acid polypeptide reads, in one-letter code: Co-chaperonin GroES (104 aa).

The protein belongs to the GroES chaperonin family. In terms of assembly, heptamer of 7 subunits arranged in a ring. Interacts with the chaperonin GroEL.

The protein resides in the cytoplasm. Functionally, together with the chaperonin GroEL, plays an essential role in assisting protein folding. The GroEL-GroES system forms a nano-cage that allows encapsulation of the non-native substrate proteins and provides a physical environment optimized to promote and accelerate protein folding. GroES binds to the apical surface of the GroEL ring, thereby capping the opening of the GroEL channel. The sequence is that of Co-chaperonin GroES from Acidiphilium cryptum (strain JF-5).